A 65-amino-acid chain; its full sequence is Protein translocase subunit SecE (65 aa).

The Cytoplasmic segment spans residues M1–V27. A helical membrane pass occupies residues K28 to L59. The Periplasmic segment spans residues S60–L65.

The protein belongs to the SecE/SEC61-gamma family. Component of the Sec protein translocase complex. Heterotrimer consisting of SecY, SecE and SecG subunits. The heterotrimers can form oligomers, although 1 heterotrimer is thought to be able to translocate proteins. Interacts with SecDF, and other proteins may be involved. The channel interacts with SecA via subunit SecY.

The protein resides in the cell inner membrane. Essential subunit of the protein translocation channel SecYEG. Clamps together the 2 halves of SecY. May contact the channel plug during translocation. In Aquifex aeolicus (strain VF5), this protein is Protein translocase subunit SecE.